A 96-amino-acid chain; its full sequence is Co-chaperonin GroES (96 aa).

Belongs to the GroES chaperonin family. Heptamer of 7 subunits arranged in a ring. Interacts with the chaperonin GroEL.

The protein resides in the cytoplasm. Together with the chaperonin GroEL, plays an essential role in assisting protein folding. The GroEL-GroES system forms a nano-cage that allows encapsulation of the non-native substrate proteins and provides a physical environment optimized to promote and accelerate protein folding. GroES binds to the apical surface of the GroEL ring, thereby capping the opening of the GroEL channel. In Leptospira interrogans serogroup Icterohaemorrhagiae serovar copenhageni (strain Fiocruz L1-130), this protein is Co-chaperonin GroES.